We begin with the raw amino-acid sequence, 379 residues long: Chaperone protein DnaJ (379 aa).

Residues 5-70 form the J domain; sequence DYYEVLGVEK…QKRAAYDQYG (66 aa). The CR-type zinc finger occupies 133 to 211; sequence GKSVEIRVPT…CHGQGRVEKT (79 aa). Residues Cys146, Cys149, Cys163, Cys166, Cys185, Cys188, Cys199, and Cys202 each contribute to the Zn(2+) site. CXXCXGXG motif repeat units follow at residues 146-153, 163-170, 185-192, and 199-206; these read CDTCDGSG, CTTCHGQG, CPTCGGKG, and CDVCHGQG.

The protein belongs to the DnaJ family. Homodimer. Requires Zn(2+) as cofactor.

The protein localises to the cytoplasm. In terms of biological role, participates actively in the response to hyperosmotic and heat shock by preventing the aggregation of stress-denatured proteins and by disaggregating proteins, also in an autonomous, DnaK-independent fashion. Unfolded proteins bind initially to DnaJ; upon interaction with the DnaJ-bound protein, DnaK hydrolyzes its bound ATP, resulting in the formation of a stable complex. GrpE releases ADP from DnaK; ATP binding to DnaK triggers the release of the substrate protein, thus completing the reaction cycle. Several rounds of ATP-dependent interactions between DnaJ, DnaK and GrpE are required for fully efficient folding. Also involved, together with DnaK and GrpE, in the DNA replication of plasmids through activation of initiation proteins. This is Chaperone protein DnaJ from Pseudoalteromonas atlantica (strain T6c / ATCC BAA-1087).